We begin with the raw amino-acid sequence, 129 residues long: Small ribosomal subunit protein uS8 (129 aa).

This sequence belongs to the universal ribosomal protein uS8 family. As to quaternary structure, part of the 30S ribosomal subunit. Contacts proteins S5 and S12.

One of the primary rRNA binding proteins, it binds directly to 16S rRNA central domain where it helps coordinate assembly of the platform of the 30S subunit. The sequence is that of Small ribosomal subunit protein uS8 from Colwellia psychrerythraea (strain 34H / ATCC BAA-681) (Vibrio psychroerythus).